Here is a 549-residue protein sequence, read N- to C-terminus: Cytoplasmic trehalase (549 aa).

Substrate contacts are provided by residues Arg-168, 175 to 176 (WD), Asn-212, 221 to 223 (RSQ), 292 to 294 (RDE), and Gly-324. Residues Asp-326 and Glu-509 each act as proton donor/acceptor in the active site. Glu-525 serves as a coordination point for substrate.

This sequence belongs to the glycosyl hydrolase 37 family. In terms of assembly, monomer.

It localises to the cytoplasm. It carries out the reaction alpha,alpha-trehalose + H2O = alpha-D-glucose + beta-D-glucose. It participates in glycan degradation; trehalose degradation; D-glucose from alpha,alpha-trehalose: step 1/1. Hydrolyzes trehalose to glucose. Could be involved, in cells returning to low osmolarity conditions, in the utilization of the accumulated cytoplasmic trehalose, which was synthesized in response to high osmolarity. The protein is Cytoplasmic trehalase of Escherichia coli O81 (strain ED1a).